A 485-amino-acid chain; its full sequence is Expansin-like protein 8 (485 aa).

Positions 1-21 (MRISIILLSLLFLSLHSLIKA) are cleaved as a signal peptide. At 22–464 (DITKLSVCGS…QSGHHASSNT (443 aa)) the chain is on the extracellular side. Residues 26–139 (LSVCGSARAV…QIVSCGYSGN (114 aa)) form the Expansin-like EG45 domain. 2 disulfide bridges follow: Cys-29–Cys-70 and Cys-73–Cys-134. Asn-117 and Asn-365 each carry an N-linked (GlcNAc...) asparagine glycan. Residues 408 to 436 (EVNNKPSTTSGTGTTSSKPSSSSGGVSGG) are disordered. Residues 414-431 (STTSGTGTTSSKPSSSSG) are compositionally biased toward low complexity. A glycan (N-linked (GlcNAc...) asparagine) is linked at Asn-454. Residues 465 to 485 (NILLPTTFVFFISITILSLLF) form a helical membrane-spanning segment.

It belongs to the expansin family. Expansin A subfamily.

It is found in the membrane. Functionally, may serve to lubricate the movement of the cellulose microfibrils during cell growth and wall extension and/or may serve to maintain the fluid state of the slug cell wall. In Dictyostelium discoideum (Social amoeba), this protein is Expansin-like protein 8 (expl8).